Reading from the N-terminus, the 589-residue chain is Transcription factor atf-6 homolog (589 aa).

Positions 1–16 are enriched in basic and acidic residues; the sequence is MNFDNTVHESNFDDLL. The tract at residues 1-82 is disordered; it reads MNFDNTVHES…SSPPLSCANF (82 aa). Low complexity-rich tracts occupy residues 36–54 and 67–78; these read GTDE…FSDQ and GDSSSDSSPPLS. Residues 250–299 enclose the bZIP domain; the sequence is QNRKIRNRMYAQASRMRKKEADEHMKMNLQELLQENEILRTENAALKQRL. The segment at 252–275 is basic motif; sequence RKIRNRMYAQASRMRKKEADEHMK. Residues 271 to 305 adopt a coiled-coil conformation; it reads DEHMKMNLQELLQENEILRTENAALKQRLAFFEHE. The leucine-zipper stretch occupies residues 281–295; the sequence is LLQENEILRTENAAL. Residues 324–344 form a helical membrane-spanning segment; it reads IIAAGSVLMMFGLFAVISPFN.

The protein belongs to the bZIP family. ATF subfamily.

It localises to the nucleus. The protein localises to the membrane. Functionally, transcription factor. Plays a role in the unfolded protein response (UPR), perhaps mainly during constitutive endoplasmic reticulum (ER) stress, by activating transcription of genes involved in the UPR. Plays a role in modulating lifespan, acting by positively regulating expression of calcium-binding chaperone crt-1, thereby influencing ER calcium homeostasis. By activating the UPR pathway, confers adaptive protection to subsequent exposure to hypoxia. Involved in protection against proteotoxicity, probably acting via the UPR. Probably acts in the UPR in parallel with the ire-1-xbp-1 and pek-1 pathways. May be regulated by endopeptidase S2P-mediated proteolytic cleavage. The sequence is that of Transcription factor atf-6 homolog from Caenorhabditis elegans.